A 117-amino-acid polypeptide reads, in one-letter code: Large ribosomal subunit protein bL20 (117 aa).

This sequence belongs to the bacterial ribosomal protein bL20 family.

In terms of biological role, binds directly to 23S ribosomal RNA and is necessary for the in vitro assembly process of the 50S ribosomal subunit. It is not involved in the protein synthesizing functions of that subunit. The protein is Large ribosomal subunit protein bL20 of Geotalea daltonii (strain DSM 22248 / JCM 15807 / FRC-32) (Geobacter daltonii).